The primary structure comprises 100 residues: Large ribosomal subunit protein bL27 (100 aa).

A propeptide spanning residues 1–9 is cleaved from the precursor; sequence MLVMNLQLF.

This sequence belongs to the bacterial ribosomal protein bL27 family. Post-translationally, the N-terminus is cleaved by ribosomal processing cysteine protease Prp.

This Clostridium botulinum (strain 657 / Type Ba4) protein is Large ribosomal subunit protein bL27.